The following is a 305-amino-acid chain: MDFSPVGEESLGVRSMCFYVETRDVRILFDAGVSLAPRRFGLPPHPRELERARAVRAEILRLAEAADVVTVSHYHRDHFTPWYPSVYMATDGEMYKRVYRGKKVLMKSPQDLNWSQRRRHYGLSKALQETGAEAVYADGGEWTFGETRVAASPPLWHGPAGSKTGRVVGFAVSDGEERLVFLPDVEGPLEPEPIAFAREARPTVVVVGGPPTYLGWDLEKAIKNLAELVELRPHTLVLAHHLLRDMQWREKVAPLFELAERRGVEVATYASLAGRPEELLEARRRELYAKEPAAAVETGEGEEED.

The protein belongs to the UPF0282 family.

This Pyrobaculum islandicum (strain DSM 4184 / JCM 9189 / GEO3) protein is UPF0282 protein Pisl_0021.